Here is a 313-residue protein sequence, read N- to C-terminus: Porphobilinogen deaminase (313 aa).

An S-(dipyrrolylmethanemethyl)cysteine modification is found at Cys-241.

Belongs to the HMBS family. As to quaternary structure, monomer. Dipyrromethane serves as cofactor.

It catalyses the reaction 4 porphobilinogen + H2O = hydroxymethylbilane + 4 NH4(+). The protein operates within porphyrin-containing compound metabolism; protoporphyrin-IX biosynthesis; coproporphyrinogen-III from 5-aminolevulinate: step 2/4. Its function is as follows. Tetrapolymerization of the monopyrrole PBG into the hydroxymethylbilane pre-uroporphyrinogen in several discrete steps. The polypeptide is Porphobilinogen deaminase (Sulfurimonas denitrificans (strain ATCC 33889 / DSM 1251) (Thiomicrospira denitrificans (strain ATCC 33889 / DSM 1251))).